The primary structure comprises 301 residues: 4-diphosphocytidyl-2-C-methyl-D-erythritol kinase (301 aa).

Lysine 10 is a catalytic residue. ATP is bound at residue 96-106 (PMGGGVGGGSS). Aspartate 138 is a catalytic residue.

The protein belongs to the GHMP kinase family. IspE subfamily.

It catalyses the reaction 4-CDP-2-C-methyl-D-erythritol + ATP = 4-CDP-2-C-methyl-D-erythritol 2-phosphate + ADP + H(+). It functions in the pathway isoprenoid biosynthesis; isopentenyl diphosphate biosynthesis via DXP pathway; isopentenyl diphosphate from 1-deoxy-D-xylulose 5-phosphate: step 3/6. Functionally, catalyzes the phosphorylation of the position 2 hydroxy group of 4-diphosphocytidyl-2C-methyl-D-erythritol. The chain is 4-diphosphocytidyl-2-C-methyl-D-erythritol kinase from Alcanivorax borkumensis (strain ATCC 700651 / DSM 11573 / NCIMB 13689 / SK2).